The primary structure comprises 169 residues: Peptide deformylase (169 aa).

Fe cation contacts are provided by Cys-91 and His-133. Glu-134 is a catalytic residue. Residue His-137 coordinates Fe cation.

This sequence belongs to the polypeptide deformylase family. It depends on Fe(2+) as a cofactor.

It carries out the reaction N-terminal N-formyl-L-methionyl-[peptide] + H2O = N-terminal L-methionyl-[peptide] + formate. Its function is as follows. Removes the formyl group from the N-terminal Met of newly synthesized proteins. Requires at least a dipeptide for an efficient rate of reaction. N-terminal L-methionine is a prerequisite for activity but the enzyme has broad specificity at other positions. This chain is Peptide deformylase, found in Klebsiella pneumoniae (strain 342).